Consider the following 412-residue polypeptide: Adenylosuccinate synthetase (412 aa).

Residues 12–18 (GDEGKGK) and 40–42 (GHE) each bind GTP. Aspartate 13 acts as the Proton acceptor in catalysis. 2 residues coordinate Mg(2+): aspartate 13 and glycine 40. Residues 13 to 16 (DEGK), 38 to 41 (NAGH), arginine 134, asparagine 212, threonine 227, and arginine 291 contribute to the IMP site. Catalysis depends on histidine 41, which acts as the Proton donor. 287 to 293 (TSTGRRR) provides a ligand contact to substrate. Residues arginine 293, 318-320 (KLD), and 400-402 (GTG) contribute to the GTP site.

This sequence belongs to the adenylosuccinate synthetase family. Homodimer. Requires Mg(2+) as cofactor.

Its subcellular location is the cytoplasm. It carries out the reaction IMP + L-aspartate + GTP = N(6)-(1,2-dicarboxyethyl)-AMP + GDP + phosphate + 2 H(+). It participates in purine metabolism; AMP biosynthesis via de novo pathway; AMP from IMP: step 1/2. Its function is as follows. Plays an important role in the de novo pathway and in the salvage pathway of purine nucleotide biosynthesis. Catalyzes the first committed step in the biosynthesis of AMP from IMP. The protein is Adenylosuccinate synthetase of Fusarium vanettenii (strain ATCC MYA-4622 / CBS 123669 / FGSC 9596 / NRRL 45880 / 77-13-4) (Fusarium solani subsp. pisi).